A 252-amino-acid polypeptide reads, in one-letter code: 5'-nucleotidase SurE (252 aa).

The a divalent metal cation site is built by Asp-8, Asp-9, Ser-40, and Asn-92.

The protein belongs to the SurE nucleotidase family. Requires a divalent metal cation as cofactor.

The protein localises to the cytoplasm. The catalysed reaction is a ribonucleoside 5'-phosphate + H2O = a ribonucleoside + phosphate. Nucleotidase that shows phosphatase activity on nucleoside 5'-monophosphates. The chain is 5'-nucleotidase SurE from Chelativorans sp. (strain BNC1).